A 59-amino-acid chain; its full sequence is Large ribosomal subunit protein bL32 (59 aa).

The segment covering 1-16 (MAVPKRKTSPSRRGMR) has biased composition (basic residues). The tract at residues 1–20 (MAVPKRKTSPSRRGMRRSHD) is disordered.

It belongs to the bacterial ribosomal protein bL32 family.

This chain is Large ribosomal subunit protein bL32, found in Novosphingobium aromaticivorans (strain ATCC 700278 / DSM 12444 / CCUG 56034 / CIP 105152 / NBRC 16084 / F199).